The sequence spans 266 residues: PTS system sorbose-specific EIIC component (266 aa).

In terms of domain architecture, PTS EIIC type-4 spans 1 to 237 (MEISTLQIIA…GGVGVIIALI (237 aa)). Transmembrane regions (helical) follow at residues 3 to 23 (ISTL…MGSV), 33 to 53 (LIAC…VMLG), 79 to 99 (IISA…IAIA), 100 to 120 (LPVA…TVVF), 151 to 171 (VAIP…SSML), 183 to 203 (QIAG…MMGV), and 219 to 239 (YLDF…LIYI).

Its subcellular location is the cell inner membrane. The phosphoenolpyruvate-dependent sugar phosphotransferase system (PTS), a major carbohydrate active transport system, catalyzes the phosphorylation of incoming sugar substrates concomitant with their translocation across the cell membrane. The enzyme II SorABFM PTS system is involved in L-sorbose transport. This chain is PTS system sorbose-specific EIIC component, found in Klebsiella pneumoniae.